A 1251-amino-acid chain; its full sequence is Botulinum neurotoxin type E (1251 aa).

Residue H212 participates in Zn(2+) binding. Residue E213 is part of the active site. Zn(2+) contacts are provided by H216 and E251. C412 and C426 are disulfide-bonded. A translocation domain (TD) region spans residues 423-819 (KSICIEINNG…ELNSMVIDTL (397 aa)). Residues 466 to 515 (NDLDQVILNFNSESAPGLSDEKLNLTIQNDAYIPKYDSNGTSDIEQHDVN) form a belt region. Residues 845 to 1067 (KRIKSSSVLN…EIQTLYNNEP (223 aa)) are N-terminus of receptor binding domain (N-RBD). Residues 1068-1251 (NANILKDFWG…ISEEHGWQEK (184 aa)) are C-terminus of receptor binding domain (C-RBD). Positions 1221–1224 (STWY) match the Host ganglioside-binding motif motif.

The protein belongs to the peptidase M27 family. In terms of assembly, heterodimer; disulfide-linked heterodimer of a light chain (LC) and a heavy chain (HC). The LC has the proteolytic/pharmacological activity, while the N- and C-terminal of the HC mediate channel formation and toxin binding, respectively. Interacts with host synaptic vesicle glycoproteins SV2A and SV2B which probably serve as coreceptors. The cofactor is Zn(2+).

The protein localises to the secreted. The protein resides in the host cytoplasm. It localises to the host cytosol. Its subcellular location is the host synapse. It is found in the host presynaptic cell membrane. The protein localises to the host cytoplasmic vesicle. The protein resides in the host secretory vesicle. It localises to the host synaptic vesicle membrane. It catalyses the reaction Limited hydrolysis of proteins of the neuroexocytosis apparatus, synaptobrevins, SNAP25 or syntaxin. No detected action on small molecule substrates.. Botulinum toxin causes flaccid paralysis by inhibiting neurotransmitter (acetylcholine) release from the presynaptic membranes of nerve terminals of eukaryotic host skeletal and autonomic nervous system, with frequent heart or respiratory failure. Precursor of botulinum neurotoxin E which has 2 coreceptors; complex polysialylated gangliosides found on neural tissue and specific membrane-anchored proteins found in synaptic vesicles. Receptor proteins are exposed on host presynaptic cell membrane during neurotransmitter release, when the toxin heavy chain (HC) binds to them. Upon synaptic vesicle recycling the toxin is taken up via the endocytic pathway. When the pH of the toxin-containing endosome drops a structural rearrangement occurs so that the N-terminus of the HC forms pores that allows the light chain (LC) to translocate into the cytosol. Once in the cytosol the disulfide bond linking the 2 subunits is reduced and LC cleaves its target protein on synaptic vesicles, preventing their fusion with the cytoplasmic membrane and thus neurotransmitter release. In terms of biological role, has proteolytic activity. After translocation into the eukaryotic host cytosol, LC hydrolyzes the '180-Arg-|-Ile-181' bond in SNAP25, blocking neurotransmitter release. Its function is as follows. Responsible for host epithelial cell transcytosis, host nerve cell targeting and translocation of light chain (LC) into host cytosol. Composed of 3 subdomains; the translocation domain (TD), and N-terminus and C-terminus of the receptor-binding domain (RBD). The RBD is responsible for the adherence of the toxin to the cell surface. It simultaneously recognizes 2 coreceptors; host polysialated gangliosides and the receptor proteins SV2A and SV2B in close proximity on host synaptic vesicles. Interaction with SV2 proteins requires SV2 glycosylation. The N-terminus of the TD wraps an extended belt around the perimeter of the LC, protecting Zn(2+) in the active site; it may also prevent premature LC dissociation from the translocation channel and protect toxin prior to translocation. The TD inserts into synaptic vesicle membrane to allow translocation into the host cytosol. Binds ganglioside GD1a in vitro. The polypeptide is Botulinum neurotoxin type E (Clostridium butyricum).